We begin with the raw amino-acid sequence, 46 residues long: Succinate dehydrogenase subunit 8, mitochondrial (46 aa).

In terms of assembly, component of complex II composed of eight subunits in plants: four classical SDH subunits SDH1, SDH2, SDH3 and SDH4 (a flavoprotein (FP), an iron-sulfur protein (IP), and a cytochrome b composed of a large and a small subunit.), as well as four subunits unknown in mitochondria from bacteria and heterotrophic eukaryotes.

It localises to the mitochondrion inner membrane. Its pathway is carbohydrate metabolism; tricarboxylic acid cycle. The sequence is that of Succinate dehydrogenase subunit 8, mitochondrial from Arabidopsis thaliana (Mouse-ear cress).